Reading from the N-terminus, the 326-residue chain is UDP-3-O-acylglucosamine N-acyltransferase (326 aa).

The active-site Proton acceptor is histidine 225.

It belongs to the transferase hexapeptide repeat family. LpxD subfamily. Homotrimer.

It carries out the reaction a UDP-3-O-[(3R)-3-hydroxyacyl]-alpha-D-glucosamine + a (3R)-hydroxyacyl-[ACP] = a UDP-2-N,3-O-bis[(3R)-3-hydroxyacyl]-alpha-D-glucosamine + holo-[ACP] + H(+). It participates in bacterial outer membrane biogenesis; LPS lipid A biosynthesis. In terms of biological role, catalyzes the N-acylation of UDP-3-O-acylglucosamine using 3-hydroxyacyl-ACP as the acyl donor. Is involved in the biosynthesis of lipid A, a phosphorylated glycolipid that anchors the lipopolysaccharide to the outer membrane of the cell. This chain is UDP-3-O-acylglucosamine N-acyltransferase, found in Acidovorax ebreus (strain TPSY) (Diaphorobacter sp. (strain TPSY)).